The following is a 204-amino-acid chain: Imidazoleglycerol-phosphate dehydratase (204 aa).

The protein belongs to the imidazoleglycerol-phosphate dehydratase family.

It localises to the cytoplasm. It catalyses the reaction D-erythro-1-(imidazol-4-yl)glycerol 3-phosphate = 3-(imidazol-4-yl)-2-oxopropyl phosphate + H2O. Its pathway is amino-acid biosynthesis; L-histidine biosynthesis; L-histidine from 5-phospho-alpha-D-ribose 1-diphosphate: step 6/9. The protein is Imidazoleglycerol-phosphate dehydratase of Albidiferax ferrireducens (strain ATCC BAA-621 / DSM 15236 / T118) (Rhodoferax ferrireducens).